The chain runs to 360 residues: Photosystem II protein D1 1 (360 aa).

At 2–31 (TTTLQRRESANLWERFCNWVTSTDNRLYVG) the chain is on the cytoplasmic side. Residues 32 to 53 (WFGVIMIPTLLAATICFVIAFI) form a helical membrane-spanning segment. At 54-110 (AAPPVDIDGIREPVSGSLLYGNNIITGAVVPSSNAIGLHFYPIWEAASLDEWLYNGG) the chain is on the lumenal side. A helical transmembrane segment spans residues 111–132 (PYQLIIFHFLLGASCYMGRQWE). Residue His118 coordinates chlorophyll a. Pheophytin a is bound by residues Tyr126 and Gln130. The Cytoplasmic segment spans residues 133-142 (LSYRLGMRPW). A helical membrane pass occupies residues 143 to 163 (ICVAYSAPLASAFAVFLIYPI). Tyr147 lines the pheophytin a pocket. At 164-191 (GQGSFSDGMPLGISGTFNFMIVFQAEHN) the chain is on the lumenal side. [CaMn4O5] cluster contacts are provided by Asp170 and Glu189. A helical transmembrane segment spans residues 192–217 (ILMHPFHQLGVAGVFGGALFCAMHGS). His198 is a chlorophyll a binding site. Residues His215 and 264–265 (SF) contribute to the a quinone site. Residue His215 participates in Fe cation binding. The Cytoplasmic segment spans residues 218–272 (LVTSSLIRETTETESANYGYKFGQEEETYNIVAAHGYFGRLIFQYASFNNSRSLH). His272 is a Fe cation binding site. A helical membrane pass occupies residues 273 to 295 (FFLAAWPVVGVWFTALGISTMAF). Over 296 to 344 (NLNGFNFNHSVIDAKGNVINTWADIINRANLGMEVMHERNAHNFPLDLA) the chain is Lumenal. His332, Glu333, Asp342, and Ala344 together coordinate [CaMn4O5] cluster. A propeptide spanning residues 345–360 (SAESAPVAMIAPSING) is cleaved from the precursor.

Belongs to the reaction center PufL/M/PsbA/D family. PSII is composed of 1 copy each of membrane proteins PsbA, PsbB, PsbC, PsbD, PsbE, PsbF, PsbH, PsbI, PsbJ, PsbK, PsbL, PsbM, PsbT, PsbX, PsbY, PsbZ, Psb30/Ycf12, peripheral proteins PsbO, CyanoQ (PsbQ), PsbU, PsbV and a large number of cofactors. It forms dimeric complexes. Precursor protein interacts with Ycf48. Part of a photosystem II (PSII) assembly intermediate complex PSII-I; crystallized from a strain deleted of psbJ, it forms monomeric PSII before addition of the oxygen evolving complex. PSII-I includes 3 assembly factors not found in mature PSII (Psb27, Psb28 and Psb34). In PSII-I the C-terminus of D1 (this subunit) is already processed but not yet found at its final position. Requires The D1/D2 heterodimer binds P680, chlorophylls that are the primary electron donor of PSII, and subsequent electron acceptors. It shares a non-heme iron and each subunit binds pheophytin, quinone, additional chlorophylls, carotenoids and lipids. D1 provides most of the ligands for the Mn4-Ca-O5 cluster of the oxygen-evolving complex (OEC). There is also a Cl(-1) ion associated with D1 and D2, which is required for oxygen evolution. PSII binds additional chlorophylls, carotenoids and specific lipids. as cofactor. C-terminally processed by CtpA; processing is essential to allow assembly of the oxygen-evolving complex and thus photosynthetic growth. In terms of processing, tyr-161 forms a radical intermediate that is referred to as redox-active TyrZ, YZ or Y-Z.

It localises to the cellular thylakoid membrane. The enzyme catalyses 2 a plastoquinone + 4 hnu + 2 H2O = 2 a plastoquinol + O2. Functionally, photosystem II (PSII) is a light-driven water:plastoquinone oxidoreductase that uses light energy to abstract electrons from H(2)O, generating O(2) and a proton gradient subsequently used for ATP formation. It consists of a core antenna complex that captures photons, and an electron transfer chain that converts photonic excitation into a charge separation. The D1/D2 (PsbA/PsbD) reaction center heterodimer binds P680, the primary electron donor of PSII as well as several subsequent electron acceptors. This is Photosystem II protein D1 1 from Thermosynechococcus vestitus (strain NIES-2133 / IAM M-273 / BP-1).